A 351-amino-acid chain; its full sequence is Leukotriene B4 receptor 1 (351 aa).

Over 1-21 the chain is Extracellular; it reads MAANTTSTAATSSPGGMSLSL. Asn4 is a glycosylation site (N-linked (GlcNAc...) asparagine). The chain crosses the membrane as a helical span at residues 22 to 44; sequence LPIVLLSVALVVGLPGNSFVVWS. The Cytoplasmic segment spans residues 45–56; the sequence is ILKRMQKRSVTA. The chain crosses the membrane as a helical span at residues 57 to 77; that stretch reads LLVLNLALADLAVLLTAPFFL. Residues 78 to 93 are Extracellular-facing; that stretch reads HFLARGTWSFEVTGCR. A helical membrane pass occupies residues 94–115; it reads LCHYVCGVSMYASVLLITIMSL. The Cytoplasmic segment spans residues 116–140; the sequence is DRSLAVARPFVSQKVRTKAFARWVL. The helical transmembrane segment at 141–161 threads the bilayer; it reads AGIWVVSFLLAIPVLVYRTVT. Residues 162–179 are Extracellular-facing; that stretch reads PKNKTLICDSRYPSDGHK. Asn164 carries N-linked (GlcNAc...) asparagine glycosylation. Residues 180-200 traverse the membrane as a helical segment; it reads VFHLLFEAITGFLLPFLAVVA. Topologically, residues 201–222 are cytoplasmic; sequence SYSDIGRRLQARRFRRSRRTGR. A helical membrane pass occupies residues 223–243; the sequence is LVVLIILAFAAFWLPYHLVNL. Residues 244–268 lie on the Extracellular side of the membrane; that stretch reads VEAGRTLAGWDKNSPAGQRLKLARY. The helical transmembrane segment at 269–289 threads the bilayer; that stretch reads VLIALAFLSSSVNPVLYACAG. At 290 to 351 the chain is on the cytoplasmic side; sequence GGLLRSAGVG…TSSTPPESSK (62 aa). Composition is skewed to polar residues over residues 311–327 and 339–351; these read EVSS…TPKA and SFMT…ESSK. The disordered stretch occupies residues 311-351; the sequence is EVSSTRRGGTLVQTPKATPTCPEPGPTDSFMTSSTPPESSK.

The protein belongs to the G-protein coupled receptor 1 family. Phosphorylated by GRK6 upon leukotriene B4 binding; which promotes desensitization. Exclusively expressed in polymorphonuclear leukocytes.

The protein resides in the cell membrane. Receptor for leukotriene B4, a potent chemoattractant involved in inflammation and immune response. This chain is Leukotriene B4 receptor 1 (Ltb4r), found in Rattus norvegicus (Rat).